The sequence spans 260 residues: Thiazole synthase (260 aa).

Lys-96 (schiff-base intermediate with DXP) is an active-site residue. 1-deoxy-D-xylulose 5-phosphate is bound by residues Gly-157, 184–185 (AG), and 206–207 (NT).

Belongs to the ThiG family. Homotetramer. Forms heterodimers with either ThiH or ThiS.

Its subcellular location is the cytoplasm. The enzyme catalyses [ThiS sulfur-carrier protein]-C-terminal-Gly-aminoethanethioate + 2-iminoacetate + 1-deoxy-D-xylulose 5-phosphate = [ThiS sulfur-carrier protein]-C-terminal Gly-Gly + 2-[(2R,5Z)-2-carboxy-4-methylthiazol-5(2H)-ylidene]ethyl phosphate + 2 H2O + H(+). It participates in cofactor biosynthesis; thiamine diphosphate biosynthesis. Functionally, catalyzes the rearrangement of 1-deoxy-D-xylulose 5-phosphate (DXP) to produce the thiazole phosphate moiety of thiamine. Sulfur is provided by the thiocarboxylate moiety of the carrier protein ThiS. In vitro, sulfur can be provided by H(2)S. The polypeptide is Thiazole synthase (Rhodopseudomonas palustris (strain BisB5)).